The chain runs to 436 residues: S-locus-specific glycoprotein S6 (436 aa).

An N-terminal signal peptide occupies residues 1 to 31 (MKGVRKPYDNSYTLSFLLVFFVLILFCPAFS). A Bulb-type lectin domain is found at 34 to 156 (TLSSTESLRI…SNNDASEYLW (123 aa)). Asparagine 46, asparagine 64, asparagine 114, asparagine 121, asparagine 245, asparagine 261, and asparagine 390 each carry an N-linked (GlcNAc...) asparagine glycan. In terms of domain architecture, PAN spans 351-431 (CSGDGFTRMK…HGQDLYVRLA (81 aa)). Disulfide bonds link cysteine 381–cysteine 406 and cysteine 389–cysteine 391.

Stigma.

In terms of biological role, involved in sporophytic self-incompatibility system (the inability of flowering plants to achieve self-fertilization). This is S-locus-specific glycoprotein S6 (SLSG) from Brassica oleracea (Wild cabbage).